The sequence spans 420 residues: Dihydrolipoyllysine-residue succinyltransferase component of 2-oxoglutarate dehydrogenase complex (420 aa).

The 76-residue stretch at 1–76 folds into the Lipoyl-binding domain; that stretch reads MAEVKVPELA…EVGQAVAVVG (76 aa). Lys-42 is subject to N6-lipoyllysine. The tract at residues 75 to 199 is disordered; it reads VGEGQVNTSN…IREKMSRRKK (125 aa). Residues 81-90 show a composition bias toward polar residues; sequence NTSNDSSNES. A compositionally biased stretch (basic and acidic residues) spans 91–102; it reads SQKDEAKEKETP. Positions 103–127 are enriched in polar residues; that stretch reads KQSNPNSSESENTQDNSQQRINATP. The Peripheral subunit-binding (PSBD) domain maps to 124 to 160; the sequence is NATPSARRHARKNGVDLSEVSGKGNDVLRKDDVENSQ. The segment covering 149–158 has biased composition (basic and acidic residues); that stretch reads DVLRKDDVEN. The segment covering 159-174 has biased composition (low complexity); sequence SQKSSSQTAKSESKSQ. Residues 175–186 are compositionally biased toward polar residues; that stretch reads NSGSKQTNNNPS. Active-site residues include His-391 and Asp-395.

The protein belongs to the 2-oxoacid dehydrogenase family. Forms a 24-polypeptide structural core with octahedral symmetry. Part of the 2-oxoglutarate dehydrogenase (OGDH) complex composed of E1 (2-oxoglutarate dehydrogenase), E2 (dihydrolipoamide succinyltransferase) and E3 (dihydrolipoamide dehydrogenase); the complex contains multiple copies of the three enzymatic components (E1, E2 and E3). It depends on (R)-lipoate as a cofactor.

The enzyme catalyses N(6)-[(R)-dihydrolipoyl]-L-lysyl-[protein] + succinyl-CoA = N(6)-[(R)-S(8)-succinyldihydrolipoyl]-L-lysyl-[protein] + CoA. It functions in the pathway amino-acid degradation; L-lysine degradation via saccharopine pathway; glutaryl-CoA from L-lysine: step 6/6. Functionally, E2 component of the 2-oxoglutarate dehydrogenase (OGDH) complex which catalyzes the second step in the conversion of 2-oxoglutarate to succinyl-CoA and CO(2). This Staphylococcus epidermidis (strain ATCC 35984 / DSM 28319 / BCRC 17069 / CCUG 31568 / BM 3577 / RP62A) protein is Dihydrolipoyllysine-residue succinyltransferase component of 2-oxoglutarate dehydrogenase complex (odhB).